Consider the following 342-residue polypeptide: Autoinducer 2 import system permease protein LsrC (342 aa).

Over 1-13 (MLKFIQNNREITA) the chain is Periplasmic. A helical membrane pass occupies residues 14 to 34 (LLAVVLLFVLPGFLDRQYLSV). The Cytoplasmic segment spans residues 35–38 (QTLT). A helical membrane pass occupies residues 39–59 (MVYSSAQILILLAMGATLVML). At 60-69 (TRNIDVSVGS) the chain is on the periplasmic side. The chain crosses the membrane as a helical span at residues 70 to 90 (ITGMCAVLLGMLLNAGYSLPV). Topologically, residues 91–92 (AC) are cytoplasmic. The helical transmembrane segment at 93–113 (VATLLLGLLAGFFNGVLVAWL) threads the bilayer. Residue lysine 114 is a topological domain, periplasmic. A helical transmembrane segment spans residues 115-135 (IPAIVATLGTLGLYRGIMLLW). Residues 136–154 (TGGKWIEGLPAELKQLSAP) are Cytoplasmic-facing. A helical transmembrane segment spans residues 155–175 (LLLGVSAIGWLTIILVAFMAW). Residues 176–212 (LLAKTAFGRSFYATGDNLQGARQLGVRTEAIRIVAFS) lie on the Periplasmic side of the membrane. Residues 213–233 (LNGCMAALAGIVFASQIGFIP) traverse the membrane as a helical segment. Residues 234 to 251 (NQTGTGLEMKAIAACVLG) lie on the Cytoplasmic side of the membrane. A helical membrane pass occupies residues 252-272 (GISLLGGSGAIIGAVLGAWFL). The Periplasmic segment spans residues 273–283 (TQIDSVLVLLR). Residues 284-304 (IPAWWNDFIAGLVLLAVLVFD) form a helical membrane-spanning segment. The Cytoplasmic portion of the chain corresponds to 305 to 342 (GRLRCALERNLRRQKYARFMTPPPSVKPASSGKKREAA).

The protein belongs to the binding-protein-dependent transport system permease family. AraH/RbsC subfamily. The complex is composed of two ATP-binding proteins (LsrA), two transmembrane proteins (LsrC and LsrD) and a solute-binding protein (LsrB).

It is found in the cell inner membrane. Part of the ABC transporter complex LsrABCD involved in autoinducer 2 (AI-2) import. Probably responsible for the translocation of the substrate across the membrane. This Escherichia coli (strain K12 / DH10B) protein is Autoinducer 2 import system permease protein LsrC (lsrC).